A 306-amino-acid polypeptide reads, in one-letter code: [methyl-Co(III) glycine betaine-specific corrinoid protein]--tetrahydrofolate methyltransferase (306 aa).

The protein belongs to the MtrH family.

It catalyses the reaction methyl-Co(III)-[glycine betaine-specific corrinoid protein] + (6S)-5,6,7,8-tetrahydrofolate = Co(I)-[glycine betaine-specific corrinoid protein] + (6S)-5-methyl-5,6,7,8-tetrahydrofolate + H(+). In terms of biological role, methyltransferase able to catalyze the transfer of a methyl group from methylcobalamin (methylCbl) to tetrahydrofolate (THF) in vitro, to generate methyl-THF and cob(I)alamin. In vivo, the methyl group probably comes from the adjacently encoded methylated corrinoid protein DSY3155. The methyl group may then be ultimately converted to carbon dioxide, and its oxidation would also provide reducing equivalents for anaerobic respiration. Thus, may function in the pathway that allows anaerobic methylotrophic growth of D.hafniense using glycine betaine. The chain is [methyl-Co(III) glycine betaine-specific corrinoid protein]--tetrahydrofolate methyltransferase from Desulfitobacterium hafniense (strain Y51).